A 335-amino-acid chain; its full sequence is L-carnitine dehydrogenase (335 aa).

An NAD(+)-binding site is contributed by 29–34 (GTGVIG).

The protein belongs to the 3-hydroxyacyl-CoA dehydrogenase family. L-carnitine dehydrogenase subfamily. As to quaternary structure, homodimer.

The protein localises to the cytoplasm. It catalyses the reaction carnitine + NAD(+) = 3-dehydrocarnitine + NADH + H(+). It functions in the pathway amine and polyamine metabolism; carnitine metabolism. Its function is as follows. Catalyzes the NAD(+)-dependent oxidation of L-carnitine to 3-dehydrocarnitine. The sequence is that of L-carnitine dehydrogenase from Streptomyces griseus subsp. griseus (strain JCM 4626 / CBS 651.72 / NBRC 13350 / KCC S-0626 / ISP 5235).